The following is a 102-amino-acid chain: Small ribosomal subunit protein uS10 (102 aa).

This sequence belongs to the universal ribosomal protein uS10 family. Part of the 30S ribosomal subunit.

Its function is as follows. Involved in the binding of tRNA to the ribosomes. The chain is Small ribosomal subunit protein uS10 from Geobacter metallireducens (strain ATCC 53774 / DSM 7210 / GS-15).